The primary structure comprises 166 residues: Lipoprotein signal peptidase (166 aa).

4 consecutive transmembrane segments (helical) span residues 9–29 (ASGA…FDQL), 45–65 (ALTS…FGFL), 71–91 (WQRW…CFLL), and 100–120 (FSLS…DRLV). Residues D126 and D144 contribute to the active site. A helical membrane pass occupies residues 135–155 (WHFPAFNLADSAITIGAVLLI).

Belongs to the peptidase A8 family.

Its subcellular location is the cell inner membrane. It catalyses the reaction Release of signal peptides from bacterial membrane prolipoproteins. Hydrolyzes -Xaa-Yaa-Zaa-|-(S,diacylglyceryl)Cys-, in which Xaa is hydrophobic (preferably Leu), and Yaa (Ala or Ser) and Zaa (Gly or Ala) have small, neutral side chains.. Its pathway is protein modification; lipoprotein biosynthesis (signal peptide cleavage). Functionally, this protein specifically catalyzes the removal of signal peptides from prolipoproteins. In Burkholderia multivorans (strain ATCC 17616 / 249), this protein is Lipoprotein signal peptidase.